The chain runs to 205 residues: G-protein coupled receptor (205 aa).

The next 5 membrane-spanning stretches (helical) occupy residues G40–Y60, F71–T91, L107–A127, I151–I171, and L185–W205. An intrachain disulfide couples C105 to C181.

It belongs to the G-protein coupled receptor 1 family.

Its subcellular location is the host membrane. The sequence is that of G-protein coupled receptor (U12) from Human herpesvirus 6B (strain Z29) (HHV-6 variant B).